A 434-amino-acid polypeptide reads, in one-letter code: [Pyruvate dehydrogenase (acetyl-transferring)] kinase isozyme 1, mitochondrial (434 aa).

A mitochondrion-targeting transit peptide spans 1-26; the sequence is MRLARLLRGGTSVRPLCAVPCASRSL. At tyrosine 136 the chain carries Phosphotyrosine; by FGFR1. The Histidine kinase domain maps to 161–391; sequence TEYKESFGVD…DAVIYIKALS (231 aa). Position 241 is a phosphotyrosine; by FGFR1, ABL1, FLT3 and JAK2 (tyrosine 241). Tyrosine 242 carries the phosphotyrosine; by FGFR1 modification. Residues 277 to 284, aspartate 316, 335 to 336, and 352 to 357 contribute to the ATP site; these read ELFKNAMR, ST, and GFGYGL. Position 336 is a phosphothreonine (threonine 336). Residue lysine 403 is modified to N6-succinyllysine.

Belongs to the PDK/BCKDK protein kinase family. Homodimer, and heterodimer with PDK2. Interacts with the pyruvate dehydrogenase complex subunit DLAT, and is part of the multimeric pyruvate dehydrogenase complex that contains multiple copies of pyruvate dehydrogenase (E1), dihydrolipoamide acetyltransferase (DLAT, E2) and lipoamide dehydrogenase (DLD, E3). Interacts with phosphoglycerate kinase PGK1; the interaction is direct, occurs under hypoxic conditions and leads to PDK1-mediated inhibition of pyruvate dehydrogenase complex activity. Phosphorylated by constitutively activated ABL1, FGFR1, FLT3 and JAK2 (in vitro), and this may also occur in cancer cells that express constitutively activated ABL1, FGFR1, FLT3 and JAK2. Phosphorylation at Tyr-241 and Tyr-242 strongly increases kinase activity, while phosphorylation at Tyr-136 has a lesser effect. Phosphorylated under hypoxic conditions at Thr-336 by phosphoglycerate kinase PGK1 which has an activating effect. As to expression, detected in pancreas islets (at protein level). Expressed predominantly in the heart.

The protein localises to the mitochondrion matrix. The catalysed reaction is L-seryl-[pyruvate dehydrogenase E1 alpha subunit] + ATP = O-phospho-L-seryl-[pyruvate dehydrogenase E1 alpha subunit] + ADP + H(+). Its activity is regulated as follows. Activated by binding to the pyruvate dehydrogenase complex subunit DLAT. Strongly activated by NADH plus acetyl-coenzyme A. Inhibited by dichloroacetate. Functionally, kinase that plays a key role in regulation of glucose and fatty acid metabolism and homeostasis via phosphorylation of the pyruvate dehydrogenase subunits PDHA1 and PDHA2. This inhibits pyruvate dehydrogenase activity, and thereby regulates metabolite flux through the tricarboxylic acid cycle, down-regulates aerobic respiration and inhibits the formation of acetyl-coenzyme A from pyruvate. Plays an important role in cellular responses to hypoxia and is important for cell proliferation under hypoxia. This chain is [Pyruvate dehydrogenase (acetyl-transferring)] kinase isozyme 1, mitochondrial (Pdk1), found in Rattus norvegicus (Rat).